The following is a 252-amino-acid chain: Carbohydrate deacetylase (252 aa).

Mg(2+) is bound by residues His-59 and His-122.

Belongs to the YdjC deacetylase family. As to quaternary structure, homodimer. Mg(2+) serves as cofactor.

Probably catalyzes the deacetylation of acetylated carbohydrates an important step in the degradation of oligosaccharides. This chain is Carbohydrate deacetylase, found in Vibrio vulnificus (strain CMCP6).